Here is a 342-residue protein sequence, read N- to C-terminus: S-adenosylmethionine:tRNA ribosyltransferase-isomerase (342 aa).

It belongs to the QueA family. Monomer.

It is found in the cytoplasm. It carries out the reaction 7-aminomethyl-7-carbaguanosine(34) in tRNA + S-adenosyl-L-methionine = epoxyqueuosine(34) in tRNA + adenine + L-methionine + 2 H(+). It participates in tRNA modification; tRNA-queuosine biosynthesis. Functionally, transfers and isomerizes the ribose moiety from AdoMet to the 7-aminomethyl group of 7-deazaguanine (preQ1-tRNA) to give epoxyqueuosine (oQ-tRNA). The protein is S-adenosylmethionine:tRNA ribosyltransferase-isomerase of Streptococcus pyogenes serotype M2 (strain MGAS10270).